The sequence spans 383 residues: MKIAAVIVAAGRGERAGGGVPKQYRRLGGFFVLTHTLLRLLHREVFDSIIVVVNPADADHIAAVEAELDIKLDTVPGGATRTASVRAGLERARDLGLDAVMIHDAARPFLGDALIDRLVKALADHPAVIPALPVADALFRGGDARMGDPVSRDGLYAAQTPQAFHLAPLLKAYARLGDTALPDDAAVIRAAGGEVALVPGEAENFKLTTRADFERAERQIMSETITVTGQGYDVHRLEPADVMWLCGVEIRAGLGLIGHSDADAGLHALTDAVLGAAGAGDIGQHFPPSDPQWKGAASDAFLLHAIKLLKQVGGELVHADITLIAERPKIGPHRDAMRARVAELTGLPEKRVNIAATTTEKLGFTGRGEGLAAQAIVTARLTT.

Positions 1-226 (MKIAAVIVAA…ERQIMSETIT (226 aa)) are 2-C-methyl-D-erythritol 4-phosphate cytidylyltransferase. The tract at residues 227-383 (VTGQGYDVHR…QAIVTARLTT (157 aa)) is 2-C-methyl-D-erythritol 2,4-cyclodiphosphate synthase. A divalent metal cation contacts are provided by Asp233 and His235. 4-CDP-2-C-methyl-D-erythritol 2-phosphate-binding positions include 233-235 (DVH) and 259-260 (HS). His267 serves as a coordination point for a divalent metal cation. 4-CDP-2-C-methyl-D-erythritol 2-phosphate-binding positions include 281–283 (DIG), 357–360 (TTTE), Phe364, and Arg367.

It in the N-terminal section; belongs to the IspD/TarI cytidylyltransferase family. IspD subfamily. This sequence in the C-terminal section; belongs to the IspF family. A divalent metal cation serves as cofactor.

The enzyme catalyses 2-C-methyl-D-erythritol 4-phosphate + CTP + H(+) = 4-CDP-2-C-methyl-D-erythritol + diphosphate. It carries out the reaction 4-CDP-2-C-methyl-D-erythritol 2-phosphate = 2-C-methyl-D-erythritol 2,4-cyclic diphosphate + CMP. It functions in the pathway isoprenoid biosynthesis; isopentenyl diphosphate biosynthesis via DXP pathway; isopentenyl diphosphate from 1-deoxy-D-xylulose 5-phosphate: step 2/6. The protein operates within isoprenoid biosynthesis; isopentenyl diphosphate biosynthesis via DXP pathway; isopentenyl diphosphate from 1-deoxy-D-xylulose 5-phosphate: step 4/6. Bifunctional enzyme that catalyzes the formation of 4-diphosphocytidyl-2-C-methyl-D-erythritol from CTP and 2-C-methyl-D-erythritol 4-phosphate (MEP) (IspD), and catalyzes the conversion of 4-diphosphocytidyl-2-C-methyl-D-erythritol 2-phosphate (CDP-ME2P) to 2-C-methyl-D-erythritol 2,4-cyclodiphosphate (ME-CPP) with a corresponding release of cytidine 5-monophosphate (CMP) (IspF). This chain is Bifunctional enzyme IspD/IspF, found in Maricaulis maris (strain MCS10) (Caulobacter maris).